We begin with the raw amino-acid sequence, 85 residues long: Phosphocarrier protein HPr (85 aa).

Positions 1 to 85 constitute an HPr domain; it reads MYSKDVEIIA…HLVALIPTLE (85 aa). Histidine 15 serves as the catalytic Pros-phosphohistidine intermediate.

The protein belongs to the HPr family.

The protein localises to the cytoplasm. Functionally, general (non sugar-specific) component of the phosphoenolpyruvate-dependent sugar phosphotransferase system (sugar PTS). This major carbohydrate active-transport system catalyzes the phosphorylation of incoming sugar substrates concomitantly with their translocation across the cell membrane. The phosphoryl group from phosphoenolpyruvate (PEP) is transferred to the phosphoryl carrier protein HPr by enzyme I. Phospho-HPr then transfers it to the PTS EIIA domain. This Haemophilus influenzae (strain ATCC 51907 / DSM 11121 / KW20 / Rd) protein is Phosphocarrier protein HPr (ptsH).